The primary structure comprises 38 residues: Large ribosomal subunit protein bL36 (38 aa).

Belongs to the bacterial ribosomal protein bL36 family.

This Baumannia cicadellinicola subsp. Homalodisca coagulata protein is Large ribosomal subunit protein bL36.